The sequence spans 360 residues: DNA replication and repair protein RecF (360 aa).

ATP is bound at residue 30–37; that stretch reads GHNGSGKT.

Belongs to the RecF family.

It localises to the cytoplasm. Its function is as follows. The RecF protein is involved in DNA metabolism; it is required for DNA replication and normal SOS inducibility. RecF binds preferentially to single-stranded, linear DNA. It also seems to bind ATP. This chain is DNA replication and repair protein RecF, found in Actinobacillus pleuropneumoniae serotype 7 (strain AP76).